The sequence spans 244 residues: 7-cyano-7-deazaguanine synthase (244 aa).

Residue 14–24 (FSGGQDSATCV) participates in ATP binding. Positions 202, 217, 220, and 223 each coordinate Zn(2+).

Belongs to the QueC family. The cofactor is Zn(2+).

The enzyme catalyses 7-carboxy-7-deazaguanine + NH4(+) + ATP = 7-cyano-7-deazaguanine + ADP + phosphate + H2O + H(+). The protein operates within purine metabolism; 7-cyano-7-deazaguanine biosynthesis. In terms of biological role, catalyzes the ATP-dependent conversion of 7-carboxy-7-deazaguanine (CDG) to 7-cyano-7-deazaguanine (preQ(0)). The protein is 7-cyano-7-deazaguanine synthase of Burkholderia thailandensis (strain ATCC 700388 / DSM 13276 / CCUG 48851 / CIP 106301 / E264).